The primary structure comprises 476 residues: MPMKIENGPFWKRVRENLDNDFMRGAVAGMQDRGYVRRLGVIEELGHWEEWRSLAEQIRKHTLENLDFYLMQLSENVAKRGGHVFFAQTAEEANEYIRRVALEKQAKKIVKSKSMVTEEINLNPVLEAIGCQVVETDLGEYILQIDDHDPPSHIVGPALHKNKEQIRDVFQRKLGYTKSSDPVELARHAREMLRRDYLTADIGITGCNFAIAESGSITLVTNEGNADLVTALPKTQITVMGMERIVPTFEEMEVLVSMLTRSAVGQKLTSYITVLTGPRDEGDVDGPEEFHLVIVDNGRSSILGTEFQPVLQCIRCAACVNVCPVYRHIGGHSYGSIYSGPIGAVLSPLLGGYDDYKELPYASSLCAACTEACPVKIPLHELLIKHRQIIVEREGKAPVAEKLAMKAFRLGTASPSLYRFGTKLAPSAFAPFAEDGRITKGPGPLKAWTESREFPAPSKERFRDWFQTRQKGGNPS.

4Fe-4S ferredoxin-type domains are found at residues 304 to 334 (GTEFQPVLQCIRCAACVNVCPVYRHIGGHSY) and 353 to 382 (YDDYKELPYASSLCAACTEACPVKIPLHEL). Residues Cys313, Cys316, Cys319, Cys323, Cys366, Cys369, and Cys373 each coordinate [4Fe-4S] cluster. The disordered stretch occupies residues 440–476 (KGPGPLKAWTESREFPAPSKERFRDWFQTRQKGGNPS). A compositionally biased stretch (basic and acidic residues) spans 449–466 (TESREFPAPSKERFRDWF). Over residues 467-476 (QTRQKGGNPS) the composition is skewed to polar residues.

This sequence belongs to the LutB/YkgF family.

Functionally, is involved in L-lactate degradation and allows cells to grow with lactate as the sole carbon source. Has probably a role as an electron transporter during oxidation of L-lactate. The chain is Lactate utilization protein B from Geobacillus kaustophilus (strain HTA426).